We begin with the raw amino-acid sequence, 308 residues long: ADP-L-glycero-D-manno-heptose-6-epimerase (308 aa).

Residues 10–11 (FI), 31–32 (DN), Lys-38, Lys-53, 75–79 (EGACS), and Asn-92 contribute to the NADP(+) site. Tyr-139 (proton acceptor) is an active-site residue. Position 143 (Lys-143) interacts with NADP(+). Asn-168 contributes to the substrate binding site. NADP(+) is bound by residues Val-169 and Lys-177. The Proton acceptor role is filled by Lys-177. Substrate is bound by residues Ser-179, His-186, 200 to 203 (FAGS), Arg-208, and Tyr-271.

It belongs to the NAD(P)-dependent epimerase/dehydratase family. HldD subfamily. Homopentamer. The cofactor is NADP(+).

The enzyme catalyses ADP-D-glycero-beta-D-manno-heptose = ADP-L-glycero-beta-D-manno-heptose. It participates in nucleotide-sugar biosynthesis; ADP-L-glycero-beta-D-manno-heptose biosynthesis; ADP-L-glycero-beta-D-manno-heptose from D-glycero-beta-D-manno-heptose 7-phosphate: step 4/4. Functionally, catalyzes the interconversion between ADP-D-glycero-beta-D-manno-heptose and ADP-L-glycero-beta-D-manno-heptose via an epimerization at carbon 6 of the heptose. This chain is ADP-L-glycero-D-manno-heptose-6-epimerase, found in Actinobacillus succinogenes (strain ATCC 55618 / DSM 22257 / CCUG 43843 / 130Z).